Reading from the N-terminus, the 481-residue chain is Cysteine--tRNA ligase (481 aa).

Cysteine 43 is a Zn(2+) binding site. Positions 45–55 match the 'HIGH' region motif; sequence ATVQGLPHIGH. Zn(2+) contacts are provided by cysteine 221, histidine 246, and glutamate 250. Residues 277-281 carry the 'KMSKS' region motif; that stretch reads KMSKS. Lysine 280 contacts ATP.

This sequence belongs to the class-I aminoacyl-tRNA synthetase family. In terms of assembly, monomer. The cofactor is Zn(2+).

The protein localises to the cytoplasm. The catalysed reaction is tRNA(Cys) + L-cysteine + ATP = L-cysteinyl-tRNA(Cys) + AMP + diphosphate. This Mycobacterium sp. (strain KMS) protein is Cysteine--tRNA ligase.